The chain runs to 738 residues: Dipeptidyl peptidase 3 (738 aa).

Alanine 2 is modified (N-acetylalanine). Histidine 450 is a Zn(2+) binding site. The active site involves glutamate 451. Zn(2+)-binding residues include histidine 455 and glutamate 508.

This sequence belongs to the peptidase M49 family. It depends on Zn(2+) as a cofactor.

It is found in the cytoplasm. It catalyses the reaction Release of an N-terminal dipeptide from a peptide comprising four or more residues, with broad specificity. Also acts on dipeptidyl 2-naphthylamides.. Inhibited by spinorphin, an opioid peptide derived from hemoglobin. Functionally, cleaves and degrades bioactive peptides, including angiotensin, Leu-enkephalin and Met-enkephalin. Also cleaves Arg-Arg-beta-naphthylamide. In Rattus norvegicus (Rat), this protein is Dipeptidyl peptidase 3 (Dpp3).